The chain runs to 325 residues: Peroxidase 68 (325 aa).

Positions 1–28 (MECYEQSRQRAAFVVLLFIVMLGSQAQA) are cleaved as a signal peptide. The residue at position 29 (glutamine 29) is a Pyrrolidone carboxylic acid. 4 disulfide bridges follow: cysteine 39–cysteine 119, cysteine 72–cysteine 77, cysteine 125–cysteine 321, and cysteine 205–cysteine 230. Catalysis depends on histidine 70, which acts as the Proton acceptor. 5 residues coordinate Ca(2+): aspartate 71, valine 74, glycine 76, aspartate 78, and serine 80. The N-linked (GlcNAc...) asparagine glycan is linked to asparagine 99. Residue proline 168 coordinates substrate. Histidine 198 lines the heme b pocket. Ca(2+) is bound at residue threonine 199. N-linked (GlcNAc...) asparagine glycosylation occurs at asparagine 214. Ca(2+) contacts are provided by aspartate 245, threonine 248, and aspartate 253.

The protein belongs to the peroxidase family. Classical plant (class III) peroxidase subfamily. Heme b is required as a cofactor. Requires Ca(2+) as cofactor.

Its subcellular location is the secreted. The enzyme catalyses 2 a phenolic donor + H2O2 = 2 a phenolic radical donor + 2 H2O. Functionally, removal of H(2)O(2), oxidation of toxic reductants, biosynthesis and degradation of lignin, suberization, auxin catabolism, response to environmental stresses such as wounding, pathogen attack and oxidative stress. These functions might be dependent on each isozyme/isoform in each plant tissue. The sequence is that of Peroxidase 68 (PER68) from Arabidopsis thaliana (Mouse-ear cress).